We begin with the raw amino-acid sequence, 171 residues long: CASP-like protein 1C3 (171 aa).

Over methionine 1 to arginine 6 the chain is Cytoplasmic. The chain crosses the membrane as a helical span at residues leucine 7–methionine 27. Topologically, residues alanine 28 to lysine 52 are extracellular. The chain crosses the membrane as a helical span at residues tyrosine 53–serine 73. Over glutamate 74–arginine 79 the chain is Cytoplasmic. A helical transmembrane segment spans residues leucine 80–leucine 100. At alanine 101–threonine 130 the chain is on the extracellular side. Residue asparagine 110 is glycosylated (N-linked (GlcNAc...) asparagine). The chain crosses the membrane as a helical span at residues glycine 131–isoleucine 151. Topologically, residues tyrosine 152–isoleucine 171 are cytoplasmic.

Belongs to the Casparian strip membrane proteins (CASP) family. In terms of assembly, homodimer and heterodimers.

The protein resides in the cell membrane. In Populus trichocarpa (Western balsam poplar), this protein is CASP-like protein 1C3.